We begin with the raw amino-acid sequence, 784 residues long: LPS-assembly protein LptD (784 aa).

An N-terminal signal peptide occupies residues 1–24 (MKKRIPTLLATMIATALYSQQGLA). Disulfide bonds link Cys-31-Cys-724 and Cys-173-Cys-725.

It belongs to the LptD family. Component of the lipopolysaccharide transport and assembly complex. Interacts with LptE and LptA. May interact with LptE during assembly of LptD by the beta-barrel assembly machine (BAM). Also interacts with LptM, which promotes the efficient assembly of the LptDE translocon by the BAM complex. Post-translationally, contains two intramolecular disulfide bonds. At least one disulfide bond is required for activity, and protein is probably fully oxidized in vivo.

It localises to the cell outer membrane. Its function is as follows. Together with LptE, is involved in the assembly of lipopolysaccharide (LPS) at the surface of the outer membrane. Contributes to n-hexane resistance. In Escherichia coli (strain K12), this protein is LPS-assembly protein LptD.